The sequence spans 26 residues: uncharacterized protein (26 aa).

This is an uncharacterized protein from Saccharomyces cerevisiae (strain ATCC 204508 / S288c) (Baker's yeast).